The sequence spans 152 residues: Large ribosomal subunit protein bL9 (152 aa).

The protein belongs to the bacterial ribosomal protein bL9 family.

In terms of biological role, binds to the 23S rRNA. This chain is Large ribosomal subunit protein bL9, found in Mycobacterium ulcerans (strain Agy99).